The sequence spans 51 residues: Sperm protamine P1 (51 aa).

The protein belongs to the protamine P1 family. In terms of assembly, cross-linked by interchain disulfide bonds around the DNA-helix. Testis.

Its subcellular location is the nucleus. The protein localises to the chromosome. In terms of biological role, protamines substitute for histones in the chromatin of sperm during the haploid phase of spermatogenesis. They compact sperm DNA into a highly condensed, stable and inactive complex. In Hylobates lar (Lar gibbon), this protein is Sperm protamine P1 (PRM1).